The following is a 366-amino-acid chain: S-adenosylmethionine:tRNA ribosyltransferase-isomerase (366 aa).

Belongs to the QueA family. In terms of assembly, monomer.

The protein localises to the cytoplasm. The catalysed reaction is 7-aminomethyl-7-carbaguanosine(34) in tRNA + S-adenosyl-L-methionine = epoxyqueuosine(34) in tRNA + adenine + L-methionine + 2 H(+). Its pathway is tRNA modification; tRNA-queuosine biosynthesis. Its function is as follows. Transfers and isomerizes the ribose moiety from AdoMet to the 7-aminomethyl group of 7-deazaguanine (preQ1-tRNA) to give epoxyqueuosine (oQ-tRNA). This chain is S-adenosylmethionine:tRNA ribosyltransferase-isomerase, found in Agrobacterium fabrum (strain C58 / ATCC 33970) (Agrobacterium tumefaciens (strain C58)).